Consider the following 371-residue polypeptide: Anhydro-N-acetylmuramic acid kinase (371 aa).

15–22 (GTSLDGVD) is a binding site for ATP.

This sequence belongs to the anhydro-N-acetylmuramic acid kinase family.

The enzyme catalyses 1,6-anhydro-N-acetyl-beta-muramate + ATP + H2O = N-acetyl-D-muramate 6-phosphate + ADP + H(+). Its pathway is amino-sugar metabolism; 1,6-anhydro-N-acetylmuramate degradation. The protein operates within cell wall biogenesis; peptidoglycan recycling. Catalyzes the specific phosphorylation of 1,6-anhydro-N-acetylmuramic acid (anhMurNAc) with the simultaneous cleavage of the 1,6-anhydro ring, generating MurNAc-6-P. Is required for the utilization of anhMurNAc either imported from the medium or derived from its own cell wall murein, and thus plays a role in cell wall recycling. In Cereibacter sphaeroides (strain ATCC 17023 / DSM 158 / JCM 6121 / CCUG 31486 / LMG 2827 / NBRC 12203 / NCIMB 8253 / ATH 2.4.1.) (Rhodobacter sphaeroides), this protein is Anhydro-N-acetylmuramic acid kinase.